We begin with the raw amino-acid sequence, 320 residues long: ATP-dependent 6-phosphofructokinase (320 aa).

ATP is bound at residue G12. ADP-binding positions include R22–R26 and R55–D60. ATP-binding positions include R73 to F74 and G103 to S106. D104 serves as a coordination point for Mg(2+). T126–D128 provides a ligand contact to substrate. Catalysis depends on D128, which acts as the Proton acceptor. R155 contributes to the ADP binding site. Substrate is bound by residues R163 and M170–R172. ADP is bound by residues G186–E188, K212, and K214–H216. Substrate contacts are provided by residues E223, R244, and H250 to R253.

This sequence belongs to the phosphofructokinase type A (PFKA) family. ATP-dependent PFK group I subfamily. Prokaryotic clade 'B1' sub-subfamily. In terms of assembly, homotetramer. Mg(2+) serves as cofactor.

The protein localises to the cytoplasm. The enzyme catalyses beta-D-fructose 6-phosphate + ATP = beta-D-fructose 1,6-bisphosphate + ADP + H(+). The protein operates within carbohydrate degradation; glycolysis; D-glyceraldehyde 3-phosphate and glycerone phosphate from D-glucose: step 3/4. With respect to regulation, allosterically activated by ADP and other diphosphonucleosides, and allosterically inhibited by phosphoenolpyruvate. In terms of biological role, catalyzes the phosphorylation of D-fructose 6-phosphate to fructose 1,6-bisphosphate by ATP, the first committing step of glycolysis. The chain is ATP-dependent 6-phosphofructokinase from Sodalis glossinidius (strain morsitans).